The chain runs to 469 residues: UDP-N-acetylmuramoylalanine--D-glutamate ligase (469 aa).

Residue 110–116 participates in ATP binding; that stretch reads GTNGKST.

It belongs to the MurCDEF family.

The protein resides in the cytoplasm. It catalyses the reaction UDP-N-acetyl-alpha-D-muramoyl-L-alanine + D-glutamate + ATP = UDP-N-acetyl-alpha-D-muramoyl-L-alanyl-D-glutamate + ADP + phosphate + H(+). It participates in cell wall biogenesis; peptidoglycan biosynthesis. Cell wall formation. Catalyzes the addition of glutamate to the nucleotide precursor UDP-N-acetylmuramoyl-L-alanine (UMA). The protein is UDP-N-acetylmuramoylalanine--D-glutamate ligase of Synechococcus sp. (strain JA-3-3Ab) (Cyanobacteria bacterium Yellowstone A-Prime).